The sequence spans 312 residues: Pre-mRNA-splicing factor 38A (312 aa).

The segment at 1-179 (MANRTVKDAH…VLEEAEQLEP (179 aa)) is N-terminal protein interaction domain. Residues serine 11, serine 193, serine 194, serine 209, and serine 226 each carry the phosphoserine modification. Residues 170–204 (VLEEAEQLEPRVSALEEDMDDVESSEEEEEEDEKL) are a coiled coil. Residues 181-312 (VSALEEDMDD…SHKKSRRGNE (132 aa)) are disordered. Positions 184-202 (LEEDMDDVESSEEEEEEDE) are enriched in acidic residues. The span at 203–224 (KLERVPSPDHRRRSYRDLDKPR) shows a compositional bias: basic and acidic residues. 2 stretches are compositionally biased toward basic residues: residues 225 to 294 (RSPA…RSHS) and 301 to 312 (KKSHKKSRRGNE).

The protein belongs to the PRP38 family. As to quaternary structure, component of the spliceosome B complex. Interacts (via N-terminal interaction domain) with ZMAT2 and MFAP1.

Its subcellular location is the nucleus. In terms of biological role, involved in pre-mRNA splicing as a component of the spliceosome. The polypeptide is Pre-mRNA-splicing factor 38A (Prpf38a) (Mus musculus (Mouse)).